A 417-amino-acid chain; its full sequence is MHLLAFGLNHHTAPLSIREKLAFPAETLPRALESLLASQAAREAAIVSTCNRTEIYCSSPDPHAALDWLCQFHGLSRAELEPYLYRLEASQAARHAFRVASGLDSMVLGETQILGQLKDAVRSAEHAGALGTLLNGLFQRTFAVAKEVRSSTAVGASSVSMSAAAVKLAEQIFPSVAELNVLFVGAGEMIELVATHFAARNPSCITVANRTLERGQRLAEQFGGNAITLAELPESLARYDVVVTSTASQLPIIGKGMVERAIKARRHRPMFMLDLAVPRDVELEVGKLDDVFLYSVDDIAGIVEVGKEARQNAAEEAETIIQARVAEFTDWLKKRETVPLIRALRDEADRARRHALEGALKQLARGDAPEKVLEALSVQLTNKLMHPPTQALSSGSGAEHDAQVQAIARLYRLHPES.

Substrate contacts are provided by residues T49 to R52, S105, E110 to Q112, and Q116. C50 (nucleophile) is an active-site residue. An NADP(+)-binding site is contributed by G185 to I190.

It belongs to the glutamyl-tRNA reductase family. In terms of assembly, homodimer.

The catalysed reaction is (S)-4-amino-5-oxopentanoate + tRNA(Glu) + NADP(+) = L-glutamyl-tRNA(Glu) + NADPH + H(+). Its pathway is porphyrin-containing compound metabolism; protoporphyrin-IX biosynthesis; 5-aminolevulinate from L-glutamyl-tRNA(Glu): step 1/2. In terms of biological role, catalyzes the NADPH-dependent reduction of glutamyl-tRNA(Glu) to glutamate 1-semialdehyde (GSA). This is Glutamyl-tRNA reductase from Chromobacterium violaceum (strain ATCC 12472 / DSM 30191 / JCM 1249 / CCUG 213 / NBRC 12614 / NCIMB 9131 / NCTC 9757 / MK).